We begin with the raw amino-acid sequence, 280 residues long: Succinate dehydrogenase [ubiquinone] iron-sulfur subunit, mitochondrial (280 aa).

The transit peptide at 1–28 (MAAVVALSLRRRFPAAALGGARLQACRG) directs the protein to the mitochondrion. The 94-residue stretch at 40–133 (KKFAIYRWDP…VSKIYPLPHM (94 aa)) folds into the 2Fe-2S ferredoxin-type domain. N6-acetyllysine is present on residues K51 and K55. Residues C93, C98, C101, and C113 each coordinate [2Fe-2S] cluster. Positions 146–218 (FYAQYKSIEP…PAVLMQAYRW (73 aa)) are interaction with SDHAF1. Residues 176 to 206 (DREKLDGLYECILCACCSTSCPSYWWNGDKY) form the 4Fe-4S ferredoxin-type domain. Positions 186, 189, and 192 each coordinate [4Fe-4S] cluster. C196 is a binding site for [3Fe-4S] cluster. W201 contacts a ubiquinone. Positions 243 and 249 each coordinate [3Fe-4S] cluster. [4Fe-4S] cluster is bound at residue C253.

The protein belongs to the succinate dehydrogenase/fumarate reductase iron-sulfur protein family. As to quaternary structure, component of complex II composed of four subunits: the flavoprotein (FP) SDHA, iron-sulfur protein (IP) SDHB, and a cytochrome b560 composed of SDHC and SDHD. Interacts with SDHAF1; the interaction is required for iron-sulfur cluster incorporation into SDHB. It depends on [2Fe-2S] cluster as a cofactor. [3Fe-4S] cluster serves as cofactor. The cofactor is [4Fe-4S] cluster.

The protein localises to the mitochondrion inner membrane. The enzyme catalyses a quinone + succinate = fumarate + a quinol. It catalyses the reaction (R)-malate + a quinone = enol-oxaloacetate + a quinol. The catalysed reaction is (S)-malate + a quinone = enol-oxaloacetate + a quinol. It participates in carbohydrate metabolism; tricarboxylic acid cycle; fumarate from succinate (eukaryal route): step 1/1. Enol-oxaloacetate inhibits the succinate dehydrogenase activity. Iron-sulfur protein (IP) subunit of the succinate dehydrogenase complex (mitochondrial respiratory chain complex II), responsible for transferring electrons from succinate to ubiquinone (coenzyme Q). SDH also oxidizes malate to the non-canonical enol form of oxaloacetate, enol-oxaloacetate. Enol-oxaloacetate, which is a potent inhibitor of the succinate dehydrogenase activity, is further isomerized into keto-oxaloacetate. This chain is Succinate dehydrogenase [ubiquinone] iron-sulfur subunit, mitochondrial (SDHB), found in Bos taurus (Bovine).